The primary structure comprises 286 residues: uncharacterized protein (286 aa).

NAD(+)-binding positions include 4–18 (AVIG…IARN) and threonine 95. Lysine 171 is an active-site residue. Lysine 239 serves as a coordination point for NAD(+).

This sequence belongs to the HIBADH-related family.

This is an uncharacterized protein from Bacillus subtilis (strain 168).